The chain runs to 542 residues: Peptide chain release factor 3 (542 aa).

Residues 14 to 283 (DKRRNFAIIS…AFLEYALKPG (270 aa)) form the tr-type G domain. GTP contacts are provided by residues 23 to 30 (SHPDAGKT), 91 to 95 (DTPGH), and 145 to 148 (NKMD).

The protein belongs to the TRAFAC class translation factor GTPase superfamily. Classic translation factor GTPase family. PrfC subfamily.

The protein localises to the cytoplasm. Increases the formation of ribosomal termination complexes and stimulates activities of RF-1 and RF-2. It binds guanine nucleotides and has strong preference for UGA stop codons. It may interact directly with the ribosome. The stimulation of RF-1 and RF-2 is significantly reduced by GTP and GDP, but not by GMP. The protein is Peptide chain release factor 3 of Trichodesmium erythraeum (strain IMS101).